Reading from the N-terminus, the 513-residue chain is Zinc finger CCCH-type with G patch domain-containing protein (513 aa).

Met1 is modified (N-acetylmethionine). The segment at 92 to 131 is disordered; that stretch reads PVAPGAELETVPSRETGPGPTEPGQEEDDGEDEEGGAALS. The segment covering 115–126 has biased composition (acidic residues); sequence GQEEDDGEDEEG. A C3H1-type zinc finger spans residues 176–202; it reads KSLKPCPFFLEGKCRFQENCRFSHGQV. The disordered stretch occupies residues 267–298; the sequence is LPPLRTDPAGSSDSDGSDADDPSYARVVEPGA. A phosphoserine mark is found at Ser278 and Ser355. One can recognise a G-patch domain in the interval 315 to 361; sequence TRGIGSRLLAKMGYEFGKGLGRRADGRVEPVHAVVLPRGKSLDQCAE. Disordered regions lie at residues 367 to 394 and 493 to 513; these read TRAG…PPPR and QEAG…MTEF. The segment covering 497-513 has biased composition (basic and acidic residues); that stretch reads LQREQRKADTHKKMTEF.

As to quaternary structure, interacts with CHD4/Mi-2; the interaction is direct.

The protein resides in the nucleus. Functionally, transcription repressor that specifically binds the 5'-GGAG[GA]A[GA]A-3' consensus sequence. Represses transcription by recruiting the chromatin multiprotein complex NuRD to target promoters. Negatively regulates expression of EGFR, a gene involved in cell proliferation, survival and migration. Its ability to repress genes of the EGFR pathway suggest it may act as a tumor suppressor. In Ovis aries (Sheep), this protein is Zinc finger CCCH-type with G patch domain-containing protein (ZGPAT).